The chain runs to 344 residues: 5-formaminoimidazole-4-carboxamide-1-(beta)-D-ribofuranosyl 5'-monophosphate synthetase (344 aa).

5-amino-1-(5-phospho-beta-D-ribosyl)imidazole-4-carboxamide contacts are provided by His-31 and Ser-96. Residues 130 to 324 enclose the ATP-grasp domain; that stretch reads MELLQRAGVP…YFDRPMDMGE (195 aa). ATP-binding positions include 153-198 and Glu-220; that span reads PVIV…VPAY. Asn-240 is a 5-amino-1-(5-phospho-beta-D-ribosyl)imidazole-4-carboxamide binding site. 2 residues coordinate Mg(2+): Glu-279 and Glu-292.

The protein belongs to the phosphohexose mutase family. It depends on Mg(2+) as a cofactor. Requires Mn(2+) as cofactor.

The catalysed reaction is 5-amino-1-(5-phospho-beta-D-ribosyl)imidazole-4-carboxamide + formate + ATP = 5-formamido-1-(5-phospho-D-ribosyl)imidazole-4-carboxamide + ADP + phosphate. It participates in purine metabolism; IMP biosynthesis via de novo pathway; 5-formamido-1-(5-phospho-D-ribosyl)imidazole-4-carboxamide from 5-amino-1-(5-phospho-D-ribosyl)imidazole-4-carboxamide (formate route): step 1/1. Functionally, catalyzes the ATP- and formate-dependent formylation of 5-aminoimidazole-4-carboxamide-1-beta-d-ribofuranosyl 5'-monophosphate (AICAR) to 5-formaminoimidazole-4-carboxamide-1-beta-d-ribofuranosyl 5'-monophosphate (FAICAR) in the absence of folates. This chain is 5-formaminoimidazole-4-carboxamide-1-(beta)-D-ribofuranosyl 5'-monophosphate synthetase, found in Pyrobaculum neutrophilum (strain DSM 2338 / JCM 9278 / NBRC 100436 / V24Sta) (Thermoproteus neutrophilus).